Reading from the N-terminus, the 65-residue chain is Large ribosomal subunit protein bL35 (65 aa).

Basic residues predominate over residues 1-15; the sequence is MPKMKTKKSASKRFT. 2 disordered regions span residues 1 to 26 and 38 to 65; these read MPKMKTKKSASKRFTARPGGTIKRGQ and TKNKRHLRGTEGVHETNLKSVRAMMPYA. Over residues 45-54 the composition is skewed to basic and acidic residues; sequence RGTEGVHETN.

This sequence belongs to the bacterial ribosomal protein bL35 family.

This chain is Large ribosomal subunit protein bL35, found in Ralstonia pickettii (strain 12J).